A 512-amino-acid chain; its full sequence is 2-isopropylmalate synthase (512 aa).

In terms of domain architecture, Pyruvate carboxyltransferase spans Ile-4–Lys-266. 4 residues coordinate Mn(2+): Asp-13, His-201, His-203, and Asn-237. The interval Glu-390–Lys-512 is regulatory domain.

It belongs to the alpha-IPM synthase/homocitrate synthase family. LeuA type 1 subfamily. In terms of assembly, homodimer. Requires Mn(2+) as cofactor.

Its subcellular location is the cytoplasm. It catalyses the reaction 3-methyl-2-oxobutanoate + acetyl-CoA + H2O = (2S)-2-isopropylmalate + CoA + H(+). The protein operates within amino-acid biosynthesis; L-leucine biosynthesis; L-leucine from 3-methyl-2-oxobutanoate: step 1/4. In terms of biological role, catalyzes the condensation of the acetyl group of acetyl-CoA with 3-methyl-2-oxobutanoate (2-ketoisovalerate) to form 3-carboxy-3-hydroxy-4-methylpentanoate (2-isopropylmalate). The sequence is that of 2-isopropylmalate synthase from Listeria monocytogenes serotype 4a (strain HCC23).